Here is a 352-residue protein sequence, read N- to C-terminus: C-C chemokine receptor type 5 (352 aa).

Residues 1–30 (MDYQVSSPTYDIDYYTSEPCQKINVKQIAA) are Extracellular-facing. Y3 carries the post-translational modification Sulfotyrosine. Residues S6 and S7 are each glycosylated (O-linked (GalNAc...) serine). Sulfotyrosine is present on residues Y10, Y14, and Y15. Intrachain disulfides connect C20–C269 and C101–C178. The chain crosses the membrane as a helical span at residues 31–58 (RLLPPLYSLVFIFGFVGNILVVLILINC). Residues 59–68 (KRLKSMTDIY) lie on the Cytoplasmic side of the membrane. Residues 69–89 (LLNLAISDLLFLLTVPFWAHY) form a helical membrane-spanning segment. Residues 90-102 (AAAQWDFGNTMCQ) are Extracellular-facing. The chain crosses the membrane as a helical span at residues 103-124 (LLTGLYFIGFFSGIFFIILLTI). At 125 to 141 (DRYLAIVHAVFALKART) the chain is on the cytoplasmic side. A helical membrane pass occupies residues 142 to 166 (VTFGVVTSVITWVVAVFASLPRIIF). Over 167–198 (TRSQREGLHYACSSHFPYSQYQFWKNFQTLKI) the chain is Extracellular. The chain crosses the membrane as a helical span at residues 199 to 218 (VILGLVLPLLVMVICYSGIL). Over 219 to 235 (KTLLRCRNEKKRHRAVR) the chain is Cytoplasmic. A helical membrane pass occupies residues 236-260 (LIFTIMIVYFLFWAPYNIVLLLNTF). Residues 261-277 (QEFFGLNNCSSSNRLDQ) lie on the Extracellular side of the membrane. The chain crosses the membrane as a helical span at residues 278-301 (AMQVTETLGMTHCCINPIIYAFVG). The Cytoplasmic segment spans residues 302–352 (EKFRNYLLVFFQKHIAKRFCKCCSIFQQEAPERASSVYTRSTGEQEISVGL). Residues C321, C323, and C324 are each lipidated (S-palmitoyl cysteine). A phosphoserine; by BARK1 mark is found at S336, S337, S342, and S349.

It belongs to the G-protein coupled receptor 1 family. In terms of assembly, interacts with PRAF2. Efficient ligand binding to CCL3/MIP-1alpha and CCL4/MIP-1beta requires sulfation, O-glycosylation and sialic acid modifications. Glycosylation on Ser-6 is required for efficient binding of CCL4. Interacts with GRK2. Interacts with ARRB1 and ARRB2. Interacts with CNIH4. Interacts with S100A4; this interaction stimulates T-lymphocyte chemotaxis. In terms of processing, sulfated on at least 2 of the N-terminal tyrosines. Sulfation is required for efficient binding of the chemokines, CCL3 and CCL4. Palmitoylation in the C-terminal is important for cell surface expression. Post-translationally, phosphorylation on serine residues in the C-terminal is stimulated by binding CC chemokines especially by APO-RANTES. In terms of processing, O-glycosylated, but not N-glycosylated. Ser-6 appears to be the major site even if Ser-7 may be also O-glycosylated. Also sialylated glycans present which contribute to chemokine binding. Thr-16 and Ser-17 may also be glycosylated and, if so, with small moieties such as a T-antigen.

Its subcellular location is the cell membrane. Its function is as follows. Receptor for a number of inflammatory CC-chemokines including CCL3/MIP-1-alpha, CCL4/MIP-1-beta and RANTES and subsequently transduces a signal by increasing the intracellular calcium ion level. May play a role in the control of granulocytic lineage proliferation or differentiation. Participates in T-lymphocyte migration to the infection site by acting as a chemotactic receptor. This Chlorocebus pygerythrus (Vervet monkey) protein is C-C chemokine receptor type 5 (CCR5).